Here is a 238-residue protein sequence, read N- to C-terminus: Orotidine 5'-phosphate decarboxylase (238 aa).

Residues aspartate 10, lysine 32, 59 to 68, threonine 122, arginine 184, glutamine 193, glycine 213, and arginine 214 contribute to the substrate site; that span reads DLKLHDIPNT. Lysine 61 serves as the catalytic Proton donor.

The protein belongs to the OMP decarboxylase family. Type 1 subfamily. Homodimer.

It carries out the reaction orotidine 5'-phosphate + H(+) = UMP + CO2. Its pathway is pyrimidine metabolism; UMP biosynthesis via de novo pathway; UMP from orotate: step 2/2. Catalyzes the decarboxylation of orotidine 5'-monophosphate (OMP) to uridine 5'-monophosphate (UMP). This chain is Orotidine 5'-phosphate decarboxylase, found in Bacillus cereus (strain AH187).